The primary structure comprises 251 residues: MVNATVARNIAGICGNVISLFLFLSPIPTFITIYKKKKVEEYKADPYLATVLNCALWVFYGLPMVQPDSLLVITINGTGLAIELVYLAIFFFFSPTSRKVKVGLWLIGEMVFVGIVATCTLLLFHTHNQRSSFVGIFCVIFVSLMYIAPLTIMSKVIKTKSVKYMPFSLSLANFLNGVVWVIYALIKFDLFILIGNGLGTVSGAVQLILYACYYKTTPKDDEDEEDEENLSKVNSQLQLSGNSGQAKRVSA.

Residues 1–12 (MVNATVARNIAG) are Extracellular-facing. N-linked (GlcNAc...) asparagine glycosylation occurs at Asn3. A MtN3/slv 1 domain is found at 12 to 96 (GICGNVISLF…LAIFFFFSPT (85 aa)). The helical transmembrane segment at 13 to 33 (ICGNVISLFLFLSPIPTFITI) threads the bilayer. Residues 34 to 45 (YKKKKVEEYKAD) are Cytoplasmic-facing. A helical transmembrane segment spans residues 46–66 (PYLATVLNCALWVFYGLPMVQ). Residues 67 to 72 (PDSLLV) are Extracellular-facing. The chain crosses the membrane as a helical span at residues 73 to 93 (ITINGTGLAIELVYLAIFFFF). Over 94-103 (SPTSRKVKVG) the chain is Cytoplasmic. A helical transmembrane segment spans residues 104–124 (LWLIGEMVFVGIVATCTLLLF). Residues 125–132 (HTHNQRSS) are Extracellular-facing. Residues 133-153 (FVGIFCVIFVSLMYIAPLTIM) form a helical membrane-spanning segment. A MtN3/slv 2 domain is found at 133–216 (FVGIFCVIFV…LILYACYYKT (84 aa)). The Cytoplasmic portion of the chain corresponds to 154–163 (SKVIKTKSVK). A helical transmembrane segment spans residues 164–186 (YMPFSLSLANFLNGVVWVIYALI). The Extracellular portion of the chain corresponds to 187-190 (KFDL). The helical transmembrane segment at 191–213 (FILIGNGLGTVSGAVQLILYACY) threads the bilayer. The Cytoplasmic segment spans residues 214 to 251 (YKTTPKDDEDEEDEENLSKVNSQLQLSGNSGQAKRVSA). The tract at residues 220 to 251 (DDEDEEDEENLSKVNSQLQLSGNSGQAKRVSA) is disordered. Over residues 231–245 (SKVNSQLQLSGNSGQ) the composition is skewed to polar residues.

This sequence belongs to the SWEET sugar transporter family. In terms of assembly, forms homooligomers and heterooligomers with SWEET8 and SWEET17.

The protein resides in the cell membrane. Its function is as follows. Mediates both low-affinity uptake and efflux of sugar across the plasma membrane. This Arabidopsis thaliana (Mouse-ear cress) protein is Bidirectional sugar transporter SWEET4.